Reading from the N-terminus, the 455-residue chain is UDP-N-acetylmuramoylalanine--D-glutamate ligase (455 aa).

118 to 124 (GTNGKST) provides a ligand contact to ATP.

The protein belongs to the MurCDEF family.

It localises to the cytoplasm. The catalysed reaction is UDP-N-acetyl-alpha-D-muramoyl-L-alanine + D-glutamate + ATP = UDP-N-acetyl-alpha-D-muramoyl-L-alanyl-D-glutamate + ADP + phosphate + H(+). It functions in the pathway cell wall biogenesis; peptidoglycan biosynthesis. In terms of biological role, cell wall formation. Catalyzes the addition of glutamate to the nucleotide precursor UDP-N-acetylmuramoyl-L-alanine (UMA). This is UDP-N-acetylmuramoylalanine--D-glutamate ligase from Myxococcus xanthus (strain DK1622).